We begin with the raw amino-acid sequence, 102 residues long: uncharacterized protein (102 aa).

The segment at 1–102 (MPVEQDGLTG…LANIREQNHQ (102 aa)) is disordered.

This is an uncharacterized protein from Caenorhabditis elegans.